Here is a 157-residue protein sequence, read N- to C-terminus: 2-C-methyl-D-erythritol 2,4-cyclodiphosphate synthase (157 aa).

Residues Asp-8 and His-10 each coordinate a divalent metal cation. 4-CDP-2-C-methyl-D-erythritol 2-phosphate-binding positions include 8–10 (DVH) and 34–35 (HS). His-42 contributes to the a divalent metal cation binding site. 4-CDP-2-C-methyl-D-erythritol 2-phosphate contacts are provided by residues 56–58 (DIG), 132–135 (TTNE), and Arg-142.

It belongs to the IspF family. As to quaternary structure, homotrimer. Requires a divalent metal cation as cofactor.

It carries out the reaction 4-CDP-2-C-methyl-D-erythritol 2-phosphate = 2-C-methyl-D-erythritol 2,4-cyclic diphosphate + CMP. It participates in isoprenoid biosynthesis; isopentenyl diphosphate biosynthesis via DXP pathway; isopentenyl diphosphate from 1-deoxy-D-xylulose 5-phosphate: step 4/6. In terms of biological role, involved in the biosynthesis of isopentenyl diphosphate (IPP) and dimethylallyl diphosphate (DMAPP), two major building blocks of isoprenoid compounds. Catalyzes the conversion of 4-diphosphocytidyl-2-C-methyl-D-erythritol 2-phosphate (CDP-ME2P) to 2-C-methyl-D-erythritol 2,4-cyclodiphosphate (ME-CPP) with a corresponding release of cytidine 5-monophosphate (CMP). The polypeptide is 2-C-methyl-D-erythritol 2,4-cyclodiphosphate synthase (Chlorobium phaeovibrioides (strain DSM 265 / 1930) (Prosthecochloris vibrioformis (strain DSM 265))).